Consider the following 409-residue polypeptide: MAFGKSLFHAIGRVSLVRQIAAGLALGIVIGSVSPQLGLAAGLFGSLFVGALKAVAPVLVFILVAATIAQHQKGNKAHIRPIIVLYLIGTFSAALTAVIAGMVFPTHIVLAGAGDVSAAPPSGIVEVLKSLLMNLVANPINAIANANYIGILAWALVLGAALRNHGSDVTRQVVADLAEAVSTVVKWIIRFAPLGIFGLVSSTIAETGFGALAGYAKLLAVLLGCMAFIALVVNPAIVWWKIRRNPYPLVFTCLRESGVYAFFTRSSAANIPVNMALAKKLGLHEDTYSISIPLGATVNMGGAAITITVLAMAAAHTQGIQVDFATALLLSLVATVSACGASGVAGGSLLLIPLACSLFGISNDVAMQVVAVGFIIGVIQDSAETALNSSTDVLFTAAADLCRQRNRAE.

Transmembrane regions (helical) follow at residues 24–44, 48–68, 82–102, 142–162, 194–214, 218–238, 292–312, 319–339, and 365–385; these read LALGIVIGSVSPQLGLAAGLF, FVGALKAVAPVLVFILVAATI, IIVLYLIGTFSAALTAVIAGM, AIANANYIGILAWALVLGAAL, LGIFGLVSSTIAETGFGALAG, LLAVLLGCMAFIALVVNPAIV, IPLGATVNMGGAAITITVLAM, GIQVDFATALLLSLVATVSAC, and VAMQVVAVGFIIGVIQDSAET.

This sequence belongs to the dicarboxylate/amino acid:cation symporter (DAACS) (TC 2.A.23) family.

The protein resides in the cell inner membrane. The catalysed reaction is L-serine(in) + Na(+)(in) = L-serine(out) + Na(+)(out). It catalyses the reaction L-threonine(in) + Na(+)(in) = L-threonine(out) + Na(+)(out). Its function is as follows. Involved in the import of serine and threonine into the cell, with the concomitant import of sodium (symport system). This chain is Serine/threonine transporter SstT, found in Neisseria meningitidis serogroup C (strain 053442).